Reading from the N-terminus, the 351-residue chain is Phosphoribosylformylglycinamidine cyclo-ligase (351 aa).

This sequence belongs to the AIR synthase family.

It is found in the cytoplasm. The catalysed reaction is 2-formamido-N(1)-(5-O-phospho-beta-D-ribosyl)acetamidine + ATP = 5-amino-1-(5-phospho-beta-D-ribosyl)imidazole + ADP + phosphate + H(+). It participates in purine metabolism; IMP biosynthesis via de novo pathway; 5-amino-1-(5-phospho-D-ribosyl)imidazole from N(2)-formyl-N(1)-(5-phospho-D-ribosyl)glycinamide: step 2/2. The chain is Phosphoribosylformylglycinamidine cyclo-ligase from Oleidesulfovibrio alaskensis (strain ATCC BAA-1058 / DSM 17464 / G20) (Desulfovibrio alaskensis).